The chain runs to 562 residues: Tissue-type plasminogen activator (562 aa).

The signal sequence occupies residues 1 to 22; the sequence is MDAMKRGLCCVLLLCGAVFVSP. Positions 23–32 are excised as a propeptide; the sequence is SQEIHARFRR. Positions 33 to 35 are cleaved as a propeptide — removed by plasmin; that stretch reads GAR. The region spanning 39–81 is the Fibronectin type-I domain; that stretch reads VICRDEKTQMIYQQHQSWLRPVLRSNRVEYCWCNSGRAQCHSV. Cystine bridges form between Cys-41/Cys-71, Cys-69/Cys-78, Cys-86/Cys-97, Cys-91/Cys-108, Cys-110/Cys-119, Cys-127/Cys-208, Cys-148/Cys-190, Cys-179/Cys-203, Cys-215/Cys-296, Cys-236/Cys-278, Cys-267/Cys-291, Cys-299/Cys-430, Cys-342/Cys-358, Cys-350/Cys-419, Cys-444/Cys-519, Cys-476/Cys-492, and Cys-509/Cys-537. An important for binding to annexin A2 region spans residues 42-52; it reads RDEKTQMIYQQ. An EGF-like domain is found at 82–120; sequence PVKSCSEPRCFNGGTCQQALYFSDFVCQCPEGFAGKCCE. O-linked (Fuc) threonine glycosylation is present at Thr-96. Kringle domains lie at 127 to 208 and 215 to 296; these read CYED…TPAC and CYFG…VPSC. An N-linked (GlcNAc...) asparagine glycan is attached at Asn-152. Asn-219 carries an N-linked (GlcNAc...) asparagine; partial glycan. The 251-residue stretch at 311–561 folds into the Peptidase S1 domain; that stretch reads IKGGLFADIA…YLDWIRDNMR (251 aa). Residues His-357 and Asp-406 each act as charge relay system in the active site. The N-linked (GlcNAc...) asparagine glycan is linked to Asn-483. Ser-513 (charge relay system) is an active-site residue.

Belongs to the peptidase S1 family. Heterodimer of chain A and chain B held by a disulfide bond. Forms a heterodimer with SERPINA5. Binds to fibrin with high affinity. This interaction leads to an increase in the catalytic efficiency of the enzyme between 100-fold and 1000-fold, due to an increase in affinity for plasminogen. Similarly, binding to heparin increases the activation of plasminogen. Binds to annexin A2, cytokeratin-8, fibronectin and laminin. Binds to mannose receptor and the low-density lipoprotein receptor-related protein (LRP1); these proteins are involved in TPA clearance. Yet unidentified interactions on endothelial cells and vascular smooth muscle cells (VSMC) lead to a 100-fold stimulation of plasminogen activation. In addition, binding to VSMC reduces TPA inhibition by PAI-1 by 30-fold. Binds LRP1B; binding is followed by internalization and degradation. Interacts with SERPINE1. In complex with SERPINE1, interacts with SORL1. Interacts with apyrase from Anopheles gambiae saliva; the interaction results in PLAT activation probably via an allosteric activation mechanism. The single chain, almost fully active enzyme, can be further processed into a two-chain fully active form by a cleavage after Arg-310 catalyzed by plasmin, tissue kallikrein or factor Xa. In terms of processing, differential cell-specific N-linked glycosylation gives rise to two glycoforms, type I (glycosylated at Asn-219) and type II (not glycosylated at Asn-219). The single chain type I glycoform is less readily converted into the two-chain form by plasmin, and the two-chain type I glycoform has a lower activity than the two-chain type II glycoform in the presence of fibrin. Post-translationally, N-glycosylation of Asn-152; the bound oligomannosidic glycan is involved in the interaction with the mannose receptor. Characterization of O-linked glycan was studied in Bowes melanoma cell line. Synthesized in numerous tissues (including tumors) and secreted into most extracellular body fluids, such as plasma, uterine fluid, saliva, gingival crevicular fluid, tears, seminal fluid, and milk.

It localises to the secreted. Its subcellular location is the extracellular space. The catalysed reaction is Specific cleavage of Arg-|-Val bond in plasminogen to form plasmin.. Inhibited by SERPINA5. Inhibited by SERPINE1. Its function is as follows. Converts the abundant, but inactive, zymogen plasminogen to plasmin by hydrolyzing a single Arg-Val bond in plasminogen. By controlling plasmin-mediated proteolysis, it plays an important role in tissue remodeling and degradation, in cell migration and many other physiopathological events. During oocyte activation, plays a role in cortical granule reaction in the zona reaction, which contributes to the block to polyspermy. The sequence is that of Tissue-type plasminogen activator from Homo sapiens (Human).